A 202-amino-acid chain; its full sequence is NADH-quinone oxidoreductase subunit C (202 aa).

It belongs to the complex I 30 kDa subunit family. In terms of assembly, NDH-1 is composed of 14 different subunits. Subunits NuoB, C, D, E, F, and G constitute the peripheral sector of the complex.

The protein localises to the cell inner membrane. The catalysed reaction is a quinone + NADH + 5 H(+)(in) = a quinol + NAD(+) + 4 H(+)(out). Functionally, NDH-1 shuttles electrons from NADH, via FMN and iron-sulfur (Fe-S) centers, to quinones in the respiratory chain. The immediate electron acceptor for the enzyme in this species is believed to be ubiquinone. Couples the redox reaction to proton translocation (for every two electrons transferred, four hydrogen ions are translocated across the cytoplasmic membrane), and thus conserves the redox energy in a proton gradient. This Brucella abortus (strain 2308) protein is NADH-quinone oxidoreductase subunit C.